Consider the following 443-residue polypeptide: EGF-containing fibulin-like extracellular matrix protein 2 (443 aa).

Residues 1–23 form the signal peptide; sequence MLPCASCLPGSLLLWALLLLLLG. Residues 36–81 form the EGF-like 1; atypical domain; the sequence is YTECTDGYEWDPDSQHCRDVNECLTIPEACKGEMKCINHYGGYLCL. Cystine bridges form between Cys-58–Cys-121, Cys-65–Cys-80, Cys-71–Cys-109, Cys-127–Cys-140, Cys-134–Cys-149, Cys-151–Cys-162, Cys-168–Cys-177, Cys-173–Cys-186, Cys-188–Cys-201, Cys-207–Cys-217, Cys-213–Cys-226, Cys-228–Cys-241, Cys-247–Cys-258, Cys-254–Cys-267, Cys-269–Cys-281, Cys-287–Cys-300, Cys-294–Cys-309, and Cys-315–Cys-327. The EGF-like 2; calcium-binding domain occupies 123–163; sequence DVDECAQALHDCRPSQDCHNLPGSYQCTCPDGYRKIGPECV. The region spanning 164 to 202 is the EGF-like 3; calcium-binding domain; the sequence is DIDECRYRYCQHRCVNLPGSFRCQCEPGFQLGPNNRSCV. N-linked (GlcNAc...) asparagine glycosylation occurs at Asn-198. The EGF-like 4; calcium-binding domain occupies 203–242; the sequence is DVNECDMGAPCEQRCFNSYGTFLCRCHQGYELHRDGFSCS. Positions 243–282 constitute an EGF-like 5; calcium-binding domain; that stretch reads DIDECSYSSYLCQYRCINEPGRFSCHCPQGYQLLATRLCQ. Positions 283-328 constitute an EGF-like 6; calcium-binding domain; sequence DIDECESGAHQCSEAQTCVNFHGGYRCVDTNRCVEPYIQVSENRCL. Asn-394 is a glycosylation site (N-linked (GlcNAc...) asparagine).

It belongs to the fibulin family. In terms of assembly, homodimer; disulfide-linked. Multimer; allows heparin binding. Monomer. Interacts with FBN1 (via N-terminal domain); this interaction inhibits EFEMP2 binding to LOX and ELN. Interacts with LOX (via propeptide); this interaction is strong and facilitates formation of ternary complexes with ELN during elastic fiber assembly; this interaction limits interaction of EFEMP2 with FBLN5. Interacts with PITX2. Interacts with ELN with moderate affinity; this interaction regulates ELN self-assembly maturation stage. Interacts with FBLN5 with moderate affinity. Interacts with LOXL1 (via propeptide), LTBP1 and TGFB1 stronger than with LOXL2 and LTBP3. Interacts with PCOLCE. Interacts with collagen type IV trimer (COL4A1-COL4A1-COL4A2), NID2 and moderately with COL15A1-derived endostatin. Interacts with EMILIN1; this interaction promotes the incorporation of EFEMP2 into the extracellular matrix. Interacts with LTBP4; the LTBP4 long form (LTBP4L) has a stronger binding affinity than the LTBP4 short form and the LTBP4 long form promotes fibrillar deposition of EFEMP2. In terms of processing, N-glycosylated; contains mostly complex-type glycans. Not O-glycosylated. Post-translationally, cleaved by ELANE; produces a 50-55 kDa fragment. Cleaved by MMP2 and MMP9; produces several fragments.

It is found in the secreted. The protein localises to the extracellular space. Its subcellular location is the extracellular matrix. The protein resides in the basement membrane. Its function is as follows. Plays a crucial role in elastic fiber formation in tissue, and in the formation of ultrastructural connections between elastic laminae and smooth muscle cells in the aorta, therefore participates in terminal differentiation and maturation of smooth muscle cell (SMC) and in the mechanical properties and wall integrity maintenance of the aorta. In addition, is involved in the control of collagen fibril assembly in tissue throught proteolytic activation of LOX leading to cross- linking of collagen and elastin. Also promotes ELN coacervation and participates in the deposition of ELN coacervates on to microfibrils but also regulates ELN cross- linking through LOX interaction. Moreover adheres to the cells through heparin binding in a calcium-dependent manner and regulates vascularlar smooth muscle cells proliferation through angiotensin signaling. This Homo sapiens (Human) protein is EGF-containing fibulin-like extracellular matrix protein 2.